Here is a 54-residue protein sequence, read N- to C-terminus: Potassium channel toxin alpha-KTx 14.5 (54 aa).

The N-terminal stretch at 1–23 is a signal peptide; that stretch reads MKIFFAILLILAVCSMAIWTVNG. Disulfide bonds link Cys-30-Cys-46, Cys-36-Cys-51, and Cys-40-Cys-53.

This sequence belongs to the short scorpion toxin superfamily. Potassium channel inhibitor family. Alpha-KTx 14 subfamily. In terms of tissue distribution, expressed by the venom gland.

It localises to the secreted. Its function is as follows. Inhibits potassium channels. May be active towards small conductance calcium-activated potassium channels (KCNN, SK), and less active towards voltage-gated potassium channels (Kv/KCN). In Mesobuthus gibbosus (Mediterranean checkered scorpion), this protein is Potassium channel toxin alpha-KTx 14.5.